A 530-amino-acid polypeptide reads, in one-letter code: Phosphoenolpyruvate carboxykinase (ATP) (530 aa).

Substrate-binding residues include arginine 60, tyrosine 195, and lysine 201. ATP-binding positions include lysine 201, histidine 221, and 237-245 (GLSGTGKTT). Residues lysine 201 and histidine 221 each coordinate Mn(2+). Aspartate 258 serves as a coordination point for Mn(2+). The ATP site is built by glutamate 286, arginine 324, and serine 449. Substrate is bound at residue arginine 324.

This sequence belongs to the phosphoenolpyruvate carboxykinase (ATP) family. Mn(2+) serves as cofactor.

It is found in the cytoplasm. It catalyses the reaction oxaloacetate + ATP = phosphoenolpyruvate + ADP + CO2. Its pathway is carbohydrate biosynthesis; gluconeogenesis. In terms of biological role, involved in the gluconeogenesis. Catalyzes the conversion of oxaloacetate (OAA) to phosphoenolpyruvate (PEP) through direct phosphoryl transfer between the nucleoside triphosphate and OAA. The protein is Phosphoenolpyruvate carboxykinase (ATP) of Geobacter metallireducens (strain ATCC 53774 / DSM 7210 / GS-15).